A 313-amino-acid chain; its full sequence is tRNA dimethylallyltransferase (313 aa).

10–17 (GPTASGKT) contributes to the ATP binding site. 12 to 17 (TASGKT) contacts substrate. 3 interaction with substrate tRNA regions span residues 35–38 (DSAM), 159–163 (QRIQR), and 240–245 (RCVGYR).

The protein belongs to the IPP transferase family. As to quaternary structure, monomer. Mg(2+) serves as cofactor.

It carries out the reaction adenosine(37) in tRNA + dimethylallyl diphosphate = N(6)-dimethylallyladenosine(37) in tRNA + diphosphate. Its function is as follows. Catalyzes the transfer of a dimethylallyl group onto the adenine at position 37 in tRNAs that read codons beginning with uridine, leading to the formation of N6-(dimethylallyl)adenosine (i(6)A). The sequence is that of tRNA dimethylallyltransferase from Legionella pneumophila (strain Lens).